A 270-amino-acid chain; its full sequence is Interleukin-1 beta (270 aa).

Positions methionine 1–aspartate 118 are excised as a propeptide.

It belongs to the IL-1 family. In terms of assembly, monomer. In its precursor form, weakly interacts with full-length MEFV; the mature cytokine does not interact at all. Interacts with integrins ITGAV:ITGBV and ITGA5:ITGB1; integrin-binding is required for IL1B signaling. Interacts with cargo receptor TMED10; the interaction is direct and is required for the secretion of IL1B mature form. Interacts with HSP90AB1; the interaction facilitates cargo translocation into the ERGIC. Interacts with HSP90B1; the interaction facilitates cargo translocation into the ERGIC.

It localises to the cytoplasm. Its subcellular location is the cytosol. The protein resides in the secreted. It is found in the lysosome. The protein localises to the extracellular exosome. Functionally, potent pro-inflammatory cytokine. Initially discovered as the major endogenous pyrogen, induces prostaglandin synthesis, neutrophil influx and activation, T-cell activation and cytokine production, B-cell activation and antibody production, and fibroblast proliferation and collagen production. Promotes Th17 differentiation of T-cells. Synergizes with IL12/interleukin-12 to induce IFNG synthesis from T-helper 1 (Th1) cells. Plays a role in angiogenesis by inducing VEGF production synergistically with TNF and IL6. Involved in transduction of inflammation downstream of pyroptosis: its mature form is specifically released in the extracellular milieu by passing through the gasdermin-D (GSDMD) pore. The polypeptide is Interleukin-1 beta (IL1B) (Mustela putorius furo (European domestic ferret)).